The sequence spans 242 residues: Synaptonemal complex central element protein 1-like (242 aa).

A disordered region spans residues 1–24; that stretch reads MAGKLKPLNVEAPEATEEAEGQAK. Residues 44–181 adopt a coiled-coil conformation; the sequence is LEPQIEDLIS…LREVERRLHS (138 aa). The disordered stretch occupies residues 206–242; sequence VRSAPEVGAGEGEAGPELPRARDEEDPEPPVAAPDAL.

The protein belongs to the SYCE family.

Its function is as follows. May be involved in meiosis. In Homo sapiens (Human), this protein is Synaptonemal complex central element protein 1-like (SYCE1L).